A 115-amino-acid polypeptide reads, in one-letter code: DNA-binding protein NP_4416A (115 aa).

Acidic residues predominate over residues 1-11 (MSGEPTDEDLE). The segment at 1–46 (MSGEPTDEDLEELRKKKMEQLKEQGGEGQSEAAEAQRQQAEAQKKA) is disordered. A compositionally biased stretch (basic and acidic residues) spans 12 to 25 (ELRKKKMEQLKEQG). Residues 29 to 41 (QSEAAEAQRQQAE) show a composition bias toward low complexity.

This sequence belongs to the PDCD5 family.

The chain is DNA-binding protein NP_4416A from Natronomonas pharaonis (strain ATCC 35678 / DSM 2160 / CIP 103997 / JCM 8858 / NBRC 14720 / NCIMB 2260 / Gabara) (Halobacterium pharaonis).